The sequence spans 449 residues: Ribosomal protein uS12 methylthiotransferase RimO (449 aa).

An MTTase N-terminal domain is found at Gln7–Ala123. The [4Fe-4S] cluster site is built by Cys16, Cys52, Cys86, Cys161, Cys165, and Cys168. The Radical SAM core domain maps to Ser147–Arg377. A TRAM domain is found at Arg380–Glu448.

It belongs to the methylthiotransferase family. RimO subfamily. The cofactor is [4Fe-4S] cluster.

The protein localises to the cytoplasm. The enzyme catalyses L-aspartate(89)-[ribosomal protein uS12]-hydrogen + (sulfur carrier)-SH + AH2 + 2 S-adenosyl-L-methionine = 3-methylsulfanyl-L-aspartate(89)-[ribosomal protein uS12]-hydrogen + (sulfur carrier)-H + 5'-deoxyadenosine + L-methionine + A + S-adenosyl-L-homocysteine + 2 H(+). Functionally, catalyzes the methylthiolation of an aspartic acid residue of ribosomal protein uS12. The polypeptide is Ribosomal protein uS12 methylthiotransferase RimO (Trichlorobacter lovleyi (strain ATCC BAA-1151 / DSM 17278 / SZ) (Geobacter lovleyi)).